The primary structure comprises 284 residues: Bifunctional protein FolD (284 aa).

NADP(+)-binding positions include 164-166 and Ser-189; that span reads GRS.

This sequence belongs to the tetrahydrofolate dehydrogenase/cyclohydrolase family. As to quaternary structure, homodimer.

The enzyme catalyses (6R)-5,10-methylene-5,6,7,8-tetrahydrofolate + NADP(+) = (6R)-5,10-methenyltetrahydrofolate + NADPH. The catalysed reaction is (6R)-5,10-methenyltetrahydrofolate + H2O = (6R)-10-formyltetrahydrofolate + H(+). The protein operates within one-carbon metabolism; tetrahydrofolate interconversion. Catalyzes the oxidation of 5,10-methylenetetrahydrofolate to 5,10-methenyltetrahydrofolate and then the hydrolysis of 5,10-methenyltetrahydrofolate to 10-formyltetrahydrofolate. The sequence is that of Bifunctional protein FolD from Listeria monocytogenes serotype 4b (strain F2365).